A 701-amino-acid polypeptide reads, in one-letter code: Elongation factor G 1 (701 aa).

One can recognise a tr-type G domain in the interval 8–290; that stretch reads ERYRNIGISA…AVIDYLPSPL (283 aa). GTP-binding positions include 17-24, 88-92, and 142-145; these read AHIDAGKT, DTPGH, and NKMD.

This sequence belongs to the TRAFAC class translation factor GTPase superfamily. Classic translation factor GTPase family. EF-G/EF-2 subfamily.

Its subcellular location is the cytoplasm. In terms of biological role, catalyzes the GTP-dependent ribosomal translocation step during translation elongation. During this step, the ribosome changes from the pre-translocational (PRE) to the post-translocational (POST) state as the newly formed A-site-bound peptidyl-tRNA and P-site-bound deacylated tRNA move to the P and E sites, respectively. Catalyzes the coordinated movement of the two tRNA molecules, the mRNA and conformational changes in the ribosome. This is Elongation factor G 1 from Paraburkholderia xenovorans (strain LB400).